The sequence spans 120 residues: Non-specific lipid-transfer protein 2 (120 aa).

The N-terminal stretch at 1 to 25 (MATSMKLACVALVMCMVVIAPMAEA) is a signal peptide. 4 cysteine pairs are disulfide-bonded: Cys29/Cys78, Cys39/Cys55, Cys56/Cys101, and Cys76/Cys115.

Belongs to the plant LTP family. As to expression, expressed in roots, stem, leaves and tendrils of the mature plant.

Functionally, plant non-specific lipid-transfer proteins transfer phospholipids as well as galactolipids across membranes. May play a role in wax or cutin deposition in the cell walls of expanding epidermal cells and certain secretory tissues. This is Non-specific lipid-transfer protein 2 from Pisum sativum (Garden pea).